Reading from the N-terminus, the 385-residue chain is uncharacterized protein (385 aa).

8 helical membrane passes run 17 to 37 (ILII…FIFT), 72 to 92 (TELM…WFLL), 107 to 127 (WILK…KCIT), 155 to 175 (ICLI…FYII), 191 to 211 (WIQA…LVLL), 295 to 315 (AFPS…FYFL), 326 to 346 (ITLL…IVVN), and 354 to 374 (ITFT…FNSF).

The protein localises to the membrane. This is an uncharacterized protein from Mycoplasma capricolum subsp. capricolum (strain California kid / ATCC 27343 / NCTC 10154).